A 302-amino-acid polypeptide reads, in one-letter code: Sulfate adenylyltransferase subunit 2 (302 aa).

The tract at residues 280 to 302 is disordered; it reads RQGRLIDSDQSASMEQKKRQGYF.

The protein belongs to the PAPS reductase family. CysD subfamily. Heterodimer composed of CysD, the smaller subunit, and CysN.

The enzyme catalyses sulfate + ATP + H(+) = adenosine 5'-phosphosulfate + diphosphate. The protein operates within sulfur metabolism; hydrogen sulfide biosynthesis; sulfite from sulfate: step 1/3. Functionally, with CysN forms the ATP sulfurylase (ATPS) that catalyzes the adenylation of sulfate producing adenosine 5'-phosphosulfate (APS) and diphosphate, the first enzymatic step in sulfur assimilation pathway. APS synthesis involves the formation of a high-energy phosphoric-sulfuric acid anhydride bond driven by GTP hydrolysis by CysN coupled to ATP hydrolysis by CysD. The polypeptide is Sulfate adenylyltransferase subunit 2 (Shewanella putrefaciens (strain CN-32 / ATCC BAA-453)).